The chain runs to 309 residues: Porphobilinogen deaminase (309 aa).

C242 carries the S-(dipyrrolylmethanemethyl)cysteine modification.

This sequence belongs to the HMBS family. Monomer. Requires dipyrromethane as cofactor.

The catalysed reaction is 4 porphobilinogen + H2O = hydroxymethylbilane + 4 NH4(+). It functions in the pathway porphyrin-containing compound metabolism; protoporphyrin-IX biosynthesis; coproporphyrinogen-III from 5-aminolevulinate: step 2/4. Tetrapolymerization of the monopyrrole PBG into the hydroxymethylbilane pre-uroporphyrinogen in several discrete steps. The protein is Porphobilinogen deaminase of Legionella pneumophila (strain Lens).